A 386-amino-acid chain; its full sequence is Acetate kinase (386 aa).

A Mg(2+)-binding site is contributed by Asn-7. Lys-14 serves as a coordination point for ATP. Arg-78 lines the substrate pocket. The Proton donor/acceptor role is filled by Asp-135. ATP contacts are provided by residues 195–199, 268–270, and 316–320; these read HLGNG, DMR, and GIGEN. Glu-370 serves as a coordination point for Mg(2+).

Belongs to the acetokinase family. In terms of assembly, homodimer. It depends on Mg(2+) as a cofactor. The cofactor is Mn(2+).

It localises to the cytoplasm. It catalyses the reaction acetate + ATP = acetyl phosphate + ADP. It participates in metabolic intermediate biosynthesis; acetyl-CoA biosynthesis; acetyl-CoA from acetate: step 1/2. Functionally, catalyzes the formation of acetyl phosphate from acetate and ATP. Can also catalyze the reverse reaction. The protein is Acetate kinase of Pseudarthrobacter chlorophenolicus (strain ATCC 700700 / DSM 12829 / CIP 107037 / JCM 12360 / KCTC 9906 / NCIMB 13794 / A6) (Arthrobacter chlorophenolicus).